Consider the following 502-residue polypeptide: Glycerol kinase (502 aa).

Thr-15 provides a ligand contact to ADP. ATP contacts are provided by Thr-15, Thr-16, and Ser-17. Thr-15 contributes to the sn-glycerol 3-phosphate binding site. Residue Arg-19 participates in ADP binding. Sn-glycerol 3-phosphate contacts are provided by Arg-85, Glu-86, and Tyr-137. Residues Arg-85, Glu-86, and Tyr-137 each coordinate glycerol. His-233 is subject to Phosphohistidine; by HPr. Asp-247 is a binding site for sn-glycerol 3-phosphate. Glycerol contacts are provided by Asp-247 and Gln-248. ADP-binding residues include Thr-269 and Gly-312. ATP is bound by residues Thr-269, Gly-312, Gln-316, and Gly-413. Residues Gly-413 and Asn-417 each contribute to the ADP site.

The protein belongs to the FGGY kinase family. Homotetramer and homodimer (in equilibrium). In terms of processing, the phosphoenolpyruvate-dependent sugar phosphotransferase system (PTS), including enzyme I, and histidine-containing protein (HPr) are required for the phosphorylation, which leads to the activation of the enzyme.

The enzyme catalyses glycerol + ATP = sn-glycerol 3-phosphate + ADP + H(+). Its pathway is polyol metabolism; glycerol degradation via glycerol kinase pathway; sn-glycerol 3-phosphate from glycerol: step 1/1. Its activity is regulated as follows. Activated by phosphorylation and inhibited by fructose 1,6-bisphosphate (FBP). Key enzyme in the regulation of glycerol uptake and metabolism. Catalyzes the phosphorylation of glycerol to yield sn-glycerol 3-phosphate. The protein is Glycerol kinase of Streptococcus agalactiae serotype Ia (strain ATCC 27591 / A909 / CDC SS700).